A 1191-amino-acid chain; its full sequence is Solute carrier family 12 member 2 (1191 aa).

The segment at 1-166 is disordered; it reads MEPAFPASSA…MSEGSLHSSG (166 aa). Residues 1-258 are Cytoplasmic-facing; it reads MEPAFPASSA…ADNKGVVKFG (258 aa). 4 stretches are compositionally biased toward low complexity: residues 13 to 25, 59 to 69, 80 to 99, and 131 to 141; these read QSQS…AGQQ, KGQTAAQPAAA, AAAP…AAAA, and SASSAHGGHQP. The span at 142–155 shows a compositional bias: polar residues; the sequence is PSESMNGYPQNGDT. Phosphothreonine; by OXSR1 and STK39 occurs at positions 175, 179, and 184. Phosphothreonine is present on residues Thr-189 and Thr-202. Residues 259 to 288 traverse the membrane as a discontinuously helical segment; sequence WIKGVLVRCMLNIWGVMLFIRLSWIVGHAG. A Na(+)-binding site is contributed by Leu-269. Asn-270 and Ile-271 together coordinate K(+). Trp-272 is a binding site for Na(+). Gly-273, Val-274, and Met-275 together coordinate chloride. Residues 289–308 form a helical membrane-spanning segment; it reads IGLALLVIGTATVVTTITGL. Residues 309–339 are Cytoplasmic-facing; it reads STSAITTNGFVRGGGAYYLISRSLGPEFGGA. Residues 340 to 367 traverse the membrane as a helical segment; the sequence is IGLIFAFANAVAVAMYVVGFAETVRDLL. Phe-344 contacts chloride. Tyr-355 is a binding site for K(+). The Extracellular portion of the chain corresponds to 368 to 377; sequence VEHNALMIDE. A helical transmembrane segment spans residues 378 to 401; sequence MSDIRIIGSVTIVVLFGISVAGME. Over 402–404 the chain is Cytoplasmic; it reads WEA. A helical transmembrane segment spans residues 405 to 426; that stretch reads KAQIVLLGILLLAIVNFTVGTF. Over 427–458 the chain is Extracellular; it reads IPANDKRAKGFFNYRGEIFSENFVPDFRDGED. A discontinuously helical membrane pass occupies residues 459–476; the sequence is FFSVFAIFFPAATGILAG. Pro-468, Ala-469, and Thr-471 together coordinate K(+). Positions 468 and 469 each coordinate chloride. Chloride-binding residues include Gly-472 and Ile-473. The Cytoplasmic portion of the chain corresponds to 477 to 491; the sequence is ANISGDLADPQLAIP. A helical membrane pass occupies residues 492 to 513; sequence KGTLLAILITTIVYAGAAVSVG. The Extracellular segment spans residues 514 to 571; the sequence is SCIVREATGNLTDAIIPGTVTNCTNVACKLGFNFSSCATNKCSYGLMNDFQVMSLVSG. N-linked (GlcNAc...) asparagine glycosylation is found at Asn-523 and Asn-535. Cysteines 536 and 541 form a disulfide. Asn-546 is a glycosylation site (N-linked (GlcNAc...) asparagine). The cysteines at positions 550 and 555 are disulfide-linked. The helical transmembrane segment at 572–596 threads the bilayer; it reads FGPLITAGIFSATLSSALASLVSAP. Ala-583, Ser-586, and Ser-587 together coordinate Na(+). Topologically, residues 597–624 are cytoplasmic; the sequence is KIFQALCKDNIYPGLHVFSVGYGKNNEP. The next 2 helical transmembrane spans lie at 625 to 645 and 646 to 664; these read LRGY…AELN and VIAP…LINF. Chloride contacts are provided by Phe-655 and Tyr-659. The Cytoplasmic portion of the chain corresponds to 665 to 687; it reads SVFHASLAKSPGWRPAFRFYNMW. Helical transmembrane passes span 688-705 and 706-718; these read ISLI…VINW and WAAL…VLAL. Topologically, residues 719 to 1191 are cytoplasmic; it reads YIYVTYKKPD…NHQSVLTFYS (473 aa). A scissor helix region spans residues 734–751; sequence STQALTYLNALQHAIRLT. The interval 929–972 is disordered; it reads HSDADSSKPSSKSVSETNSPAVCQDQKDEEDDGKASTQPLLKKE. Residues 935–948 are compositionally biased toward low complexity; it reads SKPSSKSVSETNSP. Thr-1114 is modified (phosphothreonine).

The protein belongs to the SLC12A transporter family. As to quaternary structure, homodimer. Post-translationally, phosphorylated at Thr-175, Thr-179 and Thr-184 by OXSR1/OSR1 and STK39/SPAK downstream of WNK kinases (WNK1, WNK2, WNK3 or WNK4), promoting its activity. In terms of tissue distribution, strongly expressed in rectal gland, brain, gill and intestine. Also detected at lower levels in heart, kidney, and testis.

It is found in the basolateral cell membrane. It carries out the reaction K(+)(out) + 2 chloride(out) + Na(+)(out) = K(+)(in) + 2 chloride(in) + Na(+)(in). Its activity is regulated as follows. Activated following phosphorylation by OXSR1/OSR1 and STK39/SPAK. Inhibited by bumetanide. Its function is as follows. Cation-chloride cotransporter which mediates the electroneutral transport of chloride, potassium and/or sodium ions across the membrane. Plays a vital role in the regulation of ionic balance and cell volume. The sequence is that of Solute carrier family 12 member 2 (SLC12A2) from Squalus acanthias (Spiny dogfish).